We begin with the raw amino-acid sequence, 351 residues long: Phosphoribosylformylglycinamidine cyclo-ligase (351 aa).

Belongs to the AIR synthase family.

It localises to the cytoplasm. It carries out the reaction 2-formamido-N(1)-(5-O-phospho-beta-D-ribosyl)acetamidine + ATP = 5-amino-1-(5-phospho-beta-D-ribosyl)imidazole + ADP + phosphate + H(+). Its pathway is purine metabolism; IMP biosynthesis via de novo pathway; 5-amino-1-(5-phospho-D-ribosyl)imidazole from N(2)-formyl-N(1)-(5-phospho-D-ribosyl)glycinamide: step 2/2. This is Phosphoribosylformylglycinamidine cyclo-ligase from Burkholderia vietnamiensis (strain G4 / LMG 22486) (Burkholderia cepacia (strain R1808)).